A 327-amino-acid chain; its full sequence is FERM domain-containing protein 6 (327 aa).

Residues 16–320 form the FERM domain; the sequence is RRVCIFLPND…NSHRLYMNLQ (305 aa).

It is found in the cytoplasm. Its subcellular location is the cell membrane. This chain is FERM domain-containing protein 6 (Frmd6), found in Rattus norvegicus (Rat).